Reading from the N-terminus, the 522-residue chain is E3 ubiquitin-protein ligase DMA2 (522 aa).

Disordered regions lie at residues 1–56 (MYTP…RPAS) and 69–92 (QNSQ…PSNS). Positions 14-35 (APTSSMTSNSSSASNANTTSSS) are enriched in low complexity. Residues 36-49 (GINPRNRASGTPSN) are compositionally biased toward polar residues. S206 is modified (phosphoserine). Residues K211, K256, K258, K288, K310, K333, K343, K346, K366, K406, K412, and K423 each participate in a glycyl lysine isopeptide (Lys-Gly) (interchain with G-Cter in ubiquitin) cross-link. The FHA domain maps to 295 to 358 (LVIGRYTERV…SGTFLNHQRL (64 aa)). The segment at 433-477 (CSICLCKIKPCQAIFISPCAHSWHFRCVRRLVMLSYPQFVCPNCR) adopts an RING-type; atypical zinc-finger fold.

Belongs to the DMA1 family. UBC4-dependent autoubiquitination occurs at Lys-211, Lys-258, Lys-288, Lys-310, Lys-333, Lys-343, Lys-346, Lys-366, Lys-406, Lys-412 and Lys-423. UBC13/MMS2-dependent autoubiquitination occurs at Lys-258, Lys-310, Lys-346 and Lys-366. Lys-211, Lys-256, Lys-288, Lys-310, Lys-343, Lys-258, Lys-366 and Lys-412 are also ubiquitinated in trans by DMA1 E3 ligase in association with UBC4.

It is found in the cytoplasm. The enzyme catalyses S-ubiquitinyl-[E2 ubiquitin-conjugating enzyme]-L-cysteine + [acceptor protein]-L-lysine = [E2 ubiquitin-conjugating enzyme]-L-cysteine + N(6)-ubiquitinyl-[acceptor protein]-L-lysine.. In terms of biological role, E3 ubiquitin-protein ligase which functions in cell cycle retarding in conjunction with the UBC4 and UBC13/MMS2 complex, 2 E2 ubiquitin conjugating enzymes. Involved in nutritional control of the cell cycle. Required for proper spindle positioning, likely regulating septin ring deposition at the bud neck. In Saccharomyces cerevisiae (strain YJM789) (Baker's yeast), this protein is E3 ubiquitin-protein ligase DMA2 (DMA2).